The sequence spans 438 residues: Mitochondrial distribution and morphology protein 12 (438 aa).

The SMP-LTD domain occupies 1–438 (MSIEVDWAAA…VYPSFWTFLV (438 aa)). Disordered stretches follow at residues 110–154 (SFSH…TSTL), 185–277 (SDSG…MRER), and 353–379 (GSEQ…KDKE). The segment covering 212 to 226 (DTTNSTSRPSTANTL) has biased composition (polar residues). A compositionally biased stretch (low complexity) spans 227 to 245 (PSHPSLGHSGSSGSNPHTS). Residues 354 to 364 (SEQSQGSQNPS) are compositionally biased toward polar residues. The segment covering 365 to 379 (DDGRPRSGGDQKDKE) has biased composition (basic and acidic residues).

Belongs to the MDM12 family. Component of the ER-mitochondria encounter structure (ERMES) or MDM complex, composed of mmm1, mdm10, mdm12 and mdm34. A mmm1 homodimer associates with one molecule of mdm12 on each side in a pairwise head-to-tail manner, and the SMP-LTD domains of mmm1 and mdm12 generate a continuous hydrophobic tunnel for phospholipid trafficking.

It is found in the mitochondrion outer membrane. The protein localises to the endoplasmic reticulum membrane. Component of the ERMES/MDM complex, which serves as a molecular tether to connect the endoplasmic reticulum (ER) and mitochondria. Components of this complex are involved in the control of mitochondrial shape and protein biogenesis, and function in nonvesicular lipid trafficking between the ER and mitochondria. Mdm12 is required for the interaction of the ER-resident membrane protein mmm1 and the outer mitochondrial membrane-resident beta-barrel protein mdm10. The mdm12-mmm1 subcomplex functions in the major beta-barrel assembly pathway that is responsible for biogenesis of all mitochondrial outer membrane beta-barrel proteins, and acts in a late step after the SAM complex. The mdm10-mdm12-mmm1 subcomplex further acts in the TOM40-specific pathway after the action of the mdm12-mmm1 complex. Essential for establishing and maintaining the structure of mitochondria and maintenance of mtDNA nucleoids. The polypeptide is Mitochondrial distribution and morphology protein 12 (Penicillium rubens (strain ATCC 28089 / DSM 1075 / NRRL 1951 / Wisconsin 54-1255) (Penicillium chrysogenum)).